The following is a 172-amino-acid chain: RTX-I toxin-activating lysine-acyltransferase ApxIC (172 aa).

Catalysis depends on residues His24 and Asp93.

The protein belongs to the RTX toxin acyltransferase family. As to quaternary structure, homodimer.

It is found in the cytoplasm. The enzyme catalyses a fatty acyl-[ACP] + L-lysyl-[protein] = N(6)-(fatty acyl)-L-lysyl-[protein] + holo-[ACP] + H(+). Its function is as follows. Protein-lysine acyltransferase that catalyzes fatty acylation of the protoxin, thereby converting it to the active toxin. This is RTX-I toxin-activating lysine-acyltransferase ApxIC from Actinobacillus pleuropneumoniae (Haemophilus pleuropneumoniae).